Reading from the N-terminus, the 326-residue chain is ELAV-like protein 1-B (326 aa).

RRM domains are found at residues 20 to 98, 106 to 186, and 244 to 322; these read TNLI…FARP, ANLY…FAAN, and WCIF…FKTS.

The protein belongs to the RRM elav family. As to quaternary structure, interacts (via RRM3) with cirbp. Unable to form oligomers. Part of a ribonucleoprotein (RNP) complex, at least composed of elavl1/elrA and/or elavl2/elrB, igf2bp3/vg1RBP, ddx6/Xp54, ybx2/frgy2, lsm14b/rap55b and, in a subset of RNP complexes, stau1/staufen.

The protein localises to the cytoplasm. The protein resides in the cell cortex. RNA-binding protein that binds to the 3'-UTR region of mRNAs and increases their stability. Involved in embryonic stem cells (ESCs) differentiation: preferentially binds mRNAs that are not methylated by N6-methyladenosine (m6A), stabilizing them, promoting ESCs differentiation. Binds to poly-U elements and AU-rich elements (AREs) in the 3'-UTR of target mRNAs. Acts cooperatively with cribp to stabilize AU-rich sequence (ARE)-containing mRNAs. May play a role during gastrulation. Required for the vegetal localization of vg1 mRNA. This Xenopus laevis (African clawed frog) protein is ELAV-like protein 1-B (elavl1-b).